Here is a 479-residue protein sequence, read N- to C-terminus: Probable phosphatidate cytidylyltransferase (479 aa).

The segment covering 1–28 (MRTDNIRNRKEQLKKQEKKDFDSSKDEE) has biased composition (basic and acidic residues). The disordered stretch occupies residues 1-71 (MRTDNIRNRK…NNNNNNNNIK (71 aa)). Over 1–108 (MRTDNIRNRK…LAIRSVMGAF (108 aa)) the chain is Cytoplasmic. Residues 53 to 69 (NKNIINQKTNNNNNNNN) show a composition bias toward low complexity. The chain crosses the membrane as a helical span at residues 109 to 129 (MIGFFTIVLSTDHFIVALFVI). Topologically, residues 130 to 159 (ALQLLVFKEMIALRYIEAKEKKIPHFRTLN) are extracellular. Residues 160 to 180 (WFFLFTSFFFFYAKPILITLA) form a helical membrane-spanning segment. The Cytoplasmic segment spans residues 181–192 (NYYPDIFQHFVR). The chain crosses the membrane as a helical span at residues 193–213 (YHLWHSFSLYCIGFVLFILTL). Residues 214–240 (RKGVYRYQFSQLTWTLMILMMVVVQSN) lie on the Extracellular side of the membrane. A helical transmembrane segment spans residues 241-261 (FLISNIYQGLIWFILPVSIIV). The Cytoplasmic portion of the chain corresponds to 262 to 293 (CNDIFAYFNGFFLGKKFINRPLMKISPNKTWE). A helical transmembrane segment spans residues 294–314 (GFIGATGWTLLFAYYFCGFLL). The Extracellular segment spans residues 315–375 (KYDWIVCPKG…FTYIPIQFHA (61 aa)). A helical membrane pass occupies residues 376 to 396 (LVLALFGSLIAPFGGFFASGI). The Cytoplasmic segment spans residues 397–479 (KRAYKVKDFD…IEFTTGTITA (83 aa)).

The protein belongs to the CDS family.

The protein resides in the membrane. It carries out the reaction a 1,2-diacyl-sn-glycero-3-phosphate + CTP + H(+) = a CDP-1,2-diacyl-sn-glycerol + diphosphate. It functions in the pathway phospholipid metabolism; CDP-diacylglycerol biosynthesis; CDP-diacylglycerol from sn-glycerol 3-phosphate: step 3/3. This chain is Probable phosphatidate cytidylyltransferase (cdsA), found in Dictyostelium discoideum (Social amoeba).